Here is a 187-residue protein sequence, read N- to C-terminus: Calcium and integrin-binding family member 2 (187 aa).

EF-hand domains follow at residues 66-101, 103-138, and 144-179; these read RENP…LCES, PREL…LTKS, and EVVL…APDF. Asp116, Asn118, Asp120, Asp127, Asp157, Asp159, Asp161, Lys163, and Asp168 together coordinate Ca(2+).

Monomer. Homodimer. Interacts with WHRN and MYO7A. Interacts with ITGA2B (via C-terminus cytoplasmic tail region); this interaction is stabilized/increased in a calcium and magnesium-dependent manner. Interacts with ITGA7 (via C-terminus cytoplasmic tail region); this interaction is stabilized/increased in a calcium and magnesium-dependent manner. Interacts with TMC1. Interacts with TMC2. Interacts with PIEZO1. Expressed in inner and outer segments of photoreceptor cells, as well as in the pigmented epithelium. Also observed in the inner and outer plexiform layers and in the ganglion cell layer (at protein level). Expressed in sensory hair cell stereocilia, with expression mainly at the basal body of the kinocilium and in the hair bundle stereocilia; and the apical surface of hair cells (at protein level). Located in the tip region of the stereocilia and at the apical surface of hair cells around the cuticular plate (at protein level). Not expressed in the hair bundles of the vestibular hair cells. Strongly expressed in skeletal muscles, brain, kidney and liver. Expressed in the skeletal muscle, retina and cochlea. Expressed in megakaryocytes and endothelial cells. Expressed in heart, spleen, lung, and inner ear. In the inner ear, expressed in the vestibule, basilar membrane and spiral ganglion cells. Expressed in the supporting cells in both the organ of Corti and the vestibular sensory epithelia.

The protein localises to the cytoplasm. The protein resides in the cell projection. It localises to the stereocilium. It is found in the photoreceptor inner segment. Its subcellular location is the cilium. The protein localises to the photoreceptor outer segment. The protein resides in the cell membrane. It localises to the sarcolemma. Calcium- and integrin-binding protein that plays a role in intracellular calcium homeostasis. Acts as an auxiliary subunit of the sensory mechanoelectrical transduction (MET) channel in hair cells. Essential for mechanoelectrical transduction (MET) currents in auditory hair cells and thereby required for hearing. Regulates the function of hair cell mechanotransduction by controlling the distribution of transmembrane channel-like proteins TMC1 and TMC2, and by regulating the function of the MET channels in hair cells. Required for the maintenance of auditory hair cell stereocilia bundle morphology and function and for hair-cell survival in the cochlea. Critical for proper photoreceptor cell maintenance and function. Plays a role in intracellular calcium homeostasis by decreasing ATP-induced calcium release. Seems to be dispensable for vestibular functions. In Mus musculus (Mouse), this protein is Calcium and integrin-binding family member 2 (Cib2).